A 1178-amino-acid chain; its full sequence is MASGSRATPTRSPSSARPEAPRHAHHHHHHHSQSSGGSTSRAGGGGGGGGGGGGTAATATATATESVSKAVAQYTLDARLHAVFEQSGASGRSFDYSQSLRAPPTPSSEQQIAAYLSRIQRGGHIQPFGCTLAVADDSSFRLLAFSENAADLLDLSPHHSVPSLDSAAPPPVSLGADARLLFSPSSAVLLERAFAAREISLLNPLWIHSRVSSKPFYAILHRIDVGVVIDLEPARTEDPALSIAGAVQSQKLAVRAISRLQALPGGDIKLLCDTVVEHVRELTGYDRVMVYRFHEDEHGEVVAESRRDNLEPYLGLHYPATDIPQASRFLFRQNRVRMIADCHATPVRVIQDPGMSQPLCLVGSTLRAPHGCHAQYMANMGSIASLVMAVIISSGGDDEQTGRGGISSAMKLWGLVVCHHTSPRCIPFPLRYACEFLMQAFGLQLNMELQLAHQLSEKHILRTQTLLCDMLLRDSPTGIVTQSPSIMDLVKCDGAALYYHGKYYPLGVTPTESQIKDIIEWLTVCHGDSTGLSTDSLADAGYLGAAALGDAVCGMAVAYITPSDYLFWFRSHTAKEIKWGGAKHHPEDKDDGQRMHPRSSFKAFLEVVKSRSLPWENAEMDAIHSLQLILRDSFRDAAEGTSNSKAIVNGQVQLGELELRGINELSSVAREMVRLIETATVPIFAVDTDGCINGWNAKIAELTGLSVEEAMGKSLVNDLIFKESEEIVEKLLSRALRGEEDKNVEIKLKTFGSEQSNGAIFVIVNACSSRDYTQNIVGVCFVGQDVTGQKVVMDKFINIQGDYKAIVHNPNPLIPPIFASDENTSCSEWNTAMEKLTGWSRGEVVGKFLIGEVFGSFCRLKGPDALTKFMVVIHNAIGGQDYEKFPFSFFDKNGKYVQALLTANTRSKMDGKSIGAFCFLQIASAEIQQAFEIQRQQEKKCYARMKELAYICQEIKNPLSGIRFTNSLLQMTDLNDDQRQFLETCSACEKQMSKIVKDATLQSIEDGSLVLEKSEFSFGDVMNAVVSQAMLLLRERDLQLIRDIPDEIKDASAYGDQFRIQQVLADFLLSMVRSAPSENGWVEIQVRPNVKQNSDGTDTELFIFRFACPGEGLPADIVQDMFSNSQWSTQEGVGLSTCRKILKLMGGEVQYIRESERSFFLIVLELPQPRPAADREIS.

The span at 1–15 (MASGSRATPTRSPSS) shows a compositional bias: polar residues. Residues 1–58 (MASGSRATPTRSPSSARPEAPRHAHHHHHHHSQSSGGSTSRAGGGGGGGGGGGGTAAT) are disordered. The segment covering 23 to 32 (HAHHHHHHHS) has biased composition (basic residues). A compositionally biased stretch (gly residues) spans 42 to 55 (AGGGGGGGGGGGGT). The GAF domain occupies 267 to 449 (DIKLLCDTVV…AFGLQLNMEL (183 aa)). Cysteine 372 contacts phytochromobilin. PAS domains lie at 668–739 (VARE…LRGE) and 802–873 (DYKA…MVVI). One can recognise a Histidine kinase domain in the interval 950 to 1170 (YICQEIKNPL…LIVLELPQPR (221 aa)).

Belongs to the phytochrome family. Homodimer. Contains one covalently linked phytochromobilin chromophore.

Its function is as follows. Regulatory photoreceptor which exists in two forms that are reversibly interconvertible by light: the Pr form that absorbs maximally in the red region of the spectrum and the Pfr form that absorbs maximally in the far-red region. Photoconversion of Pr to Pfr induces an array of morphogenic responses, whereas reconversion of Pfr to Pr cancels the induction of those responses. Pfr controls the expression of a number of nuclear genes including those encoding the small subunit of ribulose-bisphosphate carboxylase, chlorophyll A/B binding protein, protochlorophyllide reductase, rRNA, etc. It also controls the expression of its own gene(s) in a negative feedback fashion. This chain is Phytochrome B (PHYB), found in Sorghum bicolor (Sorghum).